A 378-amino-acid chain; its full sequence is Lipoyl synthase, mitochondrial (378 aa).

Positions 109, 114, 120, 140, 144, 147, and 356 each coordinate [4Fe-4S] cluster. A Radical SAM core domain is found at 125–345 (ETGTATATIM…QTLGMEMGFR (221 aa)).

It belongs to the radical SAM superfamily. Lipoyl synthase family. Requires [4Fe-4S] cluster as cofactor.

It localises to the mitochondrion. It carries out the reaction [[Fe-S] cluster scaffold protein carrying a second [4Fe-4S](2+) cluster] + N(6)-octanoyl-L-lysyl-[protein] + 2 oxidized [2Fe-2S]-[ferredoxin] + 2 S-adenosyl-L-methionine + 4 H(+) = [[Fe-S] cluster scaffold protein] + N(6)-[(R)-dihydrolipoyl]-L-lysyl-[protein] + 4 Fe(3+) + 2 hydrogen sulfide + 2 5'-deoxyadenosine + 2 L-methionine + 2 reduced [2Fe-2S]-[ferredoxin]. It participates in protein modification; protein lipoylation via endogenous pathway; protein N(6)-(lipoyl)lysine from octanoyl-[acyl-carrier-protein]: step 2/2. Catalyzes the radical-mediated insertion of two sulfur atoms into the C-6 and C-8 positions of the octanoyl moiety bound to the lipoyl domains of lipoate-dependent enzymes, thereby converting the octanoylated domains into lipoylated derivatives. In Medicago truncatula (Barrel medic), this protein is Lipoyl synthase, mitochondrial.